The sequence spans 705 residues: Dolichyl-diphosphooligosaccharide--protein glycosyltransferase subunit STT3A (705 aa).

Topologically, residues methionine 1 to leucine 17 are cytoplasmic. Residues leucine 18 to valine 38 form a helical membrane-spanning segment. Residues leucine 39–leucine 119 are Lumenal-facing. The DXD motif 1 signature appears at glutamate 47–aspartate 49. Aspartate 49 serves as a coordination point for Mn(2+). Residues alanine 120–leucine 138 form a helical membrane-spanning segment. Residues lysine 139–aspartate 140 lie on the Cytoplasmic side of the membrane. Residues alanine 141–isoleucine 158 form a helical membrane-spanning segment. At serine 159–glutamate 169 the chain is on the lumenal side. Residues aspartate 167 and glutamate 169 each coordinate Mn(2+). The DXD motif 2 signature appears at aspartate 167–glutamate 169. A helical transmembrane segment spans residues glycine 170–threonine 189. Topologically, residues glycine 190 to serine 191 are cytoplasmic. A helical membrane pass occupies residues isoleucine 192–valine 206. Over serine 207–glycine 211 the chain is Lumenal. A helical membrane pass occupies residues tyrosine 212–leucine 228. Residues threonine 229–serine 233 lie on the Cytoplasmic side of the membrane. A helical transmembrane segment spans residues histidine 234–phenylalanine 259. The Lumenal segment spans residues glutamine 260–histidine 267. A helical transmembrane segment spans residues methionine 268 to arginine 287. At serine 288 to arginine 300 the chain is on the cytoplasmic side. The chain crosses the membrane as a helical span at residues serine 301–glycine 321. Residues lysine 322–threonine 356 lie on the Lumenal side of the membrane. An SVSE motif motif is present at residues serine 348–glutamate 351. The chain crosses the membrane as a helical span at residues tryptophan 357–phenylalanine 379. The Cytoplasmic portion of the chain corresponds to serine 380–alanine 385. Residues arginine 386–valine 402 form a helical membrane-spanning segment. Topologically, residues methionine 403 to leucine 406 are lumenal. A dolichyl diphosphooligosaccharide-binding site is contributed by arginine 405. A helical membrane pass occupies residues methionine 407 to threonine 428. At tyrosine 429–lysine 453 the chain is on the cytoplasmic side. Residues asparagine 454 to phenylalanine 473 traverse the membrane as a helical segment. Residues histidine 474 to threonine 705 are Lumenal-facing. The interval tryptophan 525–aspartate 527 is interacts with target acceptor peptide in protein substrate. Residues tryptophan 525–glycine 529 carry the WWDYG motif motif. Position 530 (tyrosine 530) interacts with dolichyl diphosphooligosaccharide. N-linked (GlcNAc...) asparagine glycosylation is found at asparagine 537 and asparagine 544. Asparagine 548 carries N-linked (GlcNAc...) (high mannose) asparagine glycosylation. Positions aspartate 592 to methionine 599 match the DK motif motif.

This sequence belongs to the STT3 family. As to quaternary structure, component of the oligosaccharyltransferase (OST) complex. There are 2 OST complexes, OST-A and OST-B, which contain STT3A or STT3B as catalytic subunit, respectively. OST-A and OST-B contain common core subunits RPN1, RPN2, OST48, OST4, DAD1 and TMEM258, and OST-A contains DC2/OSTC and KRTCAP2/KCP2 specific accessory subunits. OST-A complex assembly occurs through the formation of 3 subcomplexes. Subcomplex 1 contains RPN1 and TMEM258, subcomplex 2 contains the OST-A-specific subunits STT3A, DC2/OSTC, and KCP2 as well as the core subunit OST4, and subcomplex 3 contains RPN2, DAD1, and OST48. The OST-A complex can form stable complexes with the Sec61 complex or with both the Sec61 and TRAP complexes. It depends on Mg(2+) as a cofactor. The cofactor is Mn(2+).

It is found in the endoplasmic reticulum. The protein localises to the endoplasmic reticulum membrane. The catalysed reaction is a di-trans,poly-cis-dolichyl diphosphooligosaccharide + L-asparaginyl-[protein] = N(4)-(oligosaccharide-(1-&gt;4)-N-acetyl-beta-D-glucosaminyl-(1-&gt;4)-N-acetyl-beta-D-glucosaminyl)-L-asparaginyl-[protein] + a di-trans,poly-cis-dolichyl diphosphate + H(+). It participates in protein modification; protein glycosylation. Catalytic subunit of the oligosaccharyl transferase (OST) complex that catalyzes the initial transfer of a defined glycan (Glc(3)Man(9)GlcNAc(2) in eukaryotes) from the lipid carrier dolichol-pyrophosphate to an asparagine residue within an Asn-X-Ser/Thr consensus motif in nascent polypeptide chains, the first step in protein N-glycosylation. N-glycosylation occurs cotranslationally and the complex associates with the Sec61 complex at the channel-forming translocon complex that mediates protein translocation across the endoplasmic reticulum (ER). All subunits are required for a maximal enzyme activity. This subunit contains the active site and the acceptor peptide and donor lipid-linked oligosaccharide (LLO) binding pockets. STT3A is present in the majority of OST complexes and mediates cotranslational N-glycosylation of most sites on target proteins, while STT3B-containing complexes are required for efficient post-translational glycosylation and mediate glycosylation of sites that have been skipped by STT3A. STT3A-containing OST-A complex is also required to prevent hyperglycosylation of some target proteins by preventing glycosylation of facultative sites before folding of target proteins is completed. The chain is Dolichyl-diphosphooligosaccharide--protein glycosyltransferase subunit STT3A from Mus musculus (Mouse).